The following is a 64-amino-acid chain: MANAAKTITVEQTASAIRRHHSQRATLIGLKLNKIGRTAELQDTPEVRGMISKVQHLVRIVDEK.

It belongs to the universal ribosomal protein uL30 family. Part of the 50S ribosomal subunit.

This chain is Large ribosomal subunit protein uL30, found in Rhodopseudomonas palustris (strain BisA53).